The primary structure comprises 357 residues: Norreticuline-7-O-methyltransferase (357 aa).

D225 lines the S-adenosyl-L-methionine pocket. The Proton acceptor role is filled by H263.

This sequence belongs to the class I-like SAM-binding methyltransferase superfamily. Cation-independent O-methyltransferase family. In terms of tissue distribution, expressed instems, leaves, roots and seedlings.

Involved in the biosynthesis of benzylisoquinoline alkaloids. Catalyzes specifically the methylation of norreticuline at position seven to produce norlaudanine. No activity with norcoclaurine, reticuline, norlaudanosoline, norisoorientaline, scoulerine, salutaridinol, oripavine, salsolinol, codeine or morphine. Involved in papaverine biosynthesis. In Papaver somniferum (Opium poppy), this protein is Norreticuline-7-O-methyltransferase.